Reading from the N-terminus, the 123-residue chain is cAMP-responsive element-binding protein-like 2 (123 aa).

A disordered region spans residues 1–24 (MDDSKVVGGKVKKPGKRGRKPAKI). The span at 10-21 (KVKKPGKRGRKP) shows a compositional bias: basic residues. The bZIP domain occupies 23–86 (KIDLKAKLER…MAMDQGKIPS (64 aa)). Residues 29-60 (KLERSRQSARECRARKKLRYQYLEELVSSRER) form a basic motif region. The segment at 62 to 69 (ICALREEL) is leucine-zipper. The disordered stretch occupies residues 92–123 (LTGEEQSKPQQNSSRHPKAGKTDANTNSLVGN). Residues 114–123 (DANTNSLVGN) are compositionally biased toward polar residues.

This sequence belongs to the bZIP family. ATF subfamily. In terms of assembly, interacts with CREB1; regulates CREB1 phosphorylation, stability and transcriptional activity. Phosphorylated by AMPK. As to expression, widely expressed with higher expression in adipose tissue, skeletal muscle, and liver (at protein level).

The protein resides in the nucleus. Probable regulator of CREB1 transcriptional activity which is involved in adipose cells differentiation. May also play a regulatory role in the cell cycle. The chain is cAMP-responsive element-binding protein-like 2 (Crebl2) from Mus musculus (Mouse).